Reading from the N-terminus, the 305-residue chain is ATP-dependent Clp protease proteolytic subunit-related protein 4, chloroplastic (305 aa).

The N-terminal 68 residues, 1 to 68 (MEVAAATATS…SSDLCGAKLR (68 aa)), are a transit peptide targeting the chloroplast.

This sequence belongs to the peptidase S14 family. As to quaternary structure, component of the chloroplastic Clp protease core complex which consist of at least 16 proteins: CLPP4 (3 copies), CLPP5 (3 copies), CLPR4 (2 copies), ClpP1 (1 copy), CLPP6 (1 copy), CLPR2 (1 copy), CLPT1 (1 copy), CLPT2 (1 copy) and 3 copies of CLPP3 and/or CLPR1 and/or CLPR3. The core complex is organized in two heptameric rings, one containing CLPP3,4,5,6 in a 1:2:3:1 ratio and the other CLPP1 and CLPR1,2,3,4 in a 3:1:1:1:1 ratio.

The protein resides in the plastid. The protein localises to the chloroplast. Functionally, involved in plastid protein homeostasis. The sequence is that of ATP-dependent Clp protease proteolytic subunit-related protein 4, chloroplastic from Arabidopsis thaliana (Mouse-ear cress).